The sequence spans 392 residues: Mycofactocin maturase MftC (392 aa).

The Radical SAM core domain occupies 18–228 (LDAPICLTWE…YDWLVAKGDR (211 aa)). [4Fe-4S] cluster-binding residues include Cys-32, Cys-36, Cys-39, Cys-253, Cys-260, Cys-271, Cys-312, Cys-315, Cys-321, Cys-325, and Cys-343. Residues 354-367 (KERVKPKPSGDHSR) are compositionally biased toward basic and acidic residues. Residues 354-377 (KERVKPKPSGDHSRGTKQGPVALK) are disordered.

This sequence belongs to the radical SAM superfamily. MftC family. Requires [4Fe-4S] cluster as cofactor.

The enzyme catalyses [mycofactocin precursor peptide]-C-terminal glycyl-L-valyl-L-tyrosine + S-adenosyl-L-methionine = [mycofactocin precursor peptide]-C-terminal glycyl-N-{[2-(4-hydroxyphenyl)ethenyl]-3-methylbutanamide} + 5'-deoxyadenosine + L-methionine + CO2. The catalysed reaction is [mycofactocin precursor peptide]-C-terminal glycyl-N-{[2-(4-hydroxyphenyl)ethenyl]-3-methylbutanamide} + AH2 + S-adenosyl-L-methionine = [mycofactocin precursor peptide]-C-terminal glycyl-N-{5-[(4-hydroxyphenyl)methyl]-4,4-dimethyl-2-oxopyrrolidin-3-yl}acetamide + 5'-deoxyadenosine + L-methionine + A + H(+). In terms of biological role, radical S-adenosylmethionine (SAM) enzyme responsible for the first step of the biosynthesis of the enzyme cofactor mycofactocin (MFT). Catalyzes two reactions at the C-terminus of the mycofactocin precursor (the MftA peptide). The first one is the oxidative decarboxylation of the C-terminal L-tyrosine of MftA, forming an unsaturated tyramine moiety. The second reaction is the cross-linking of the tyramine with the penultimate L-valine residue, forming a five-membered lactam ring. Its activity requires the presence of the MftB chaperone. Is required for the in vivo ethanol assimilation in M.smegmatis. The sequence is that of Mycofactocin maturase MftC from Mycolicibacterium smegmatis (strain ATCC 700084 / mc(2)155) (Mycobacterium smegmatis).